Consider the following 613-residue polypeptide: GPI mannosyltransferase 3 (613 aa).

Asn-19 carries N-linked (GlcNAc...) asparagine glycosylation. Helical transmembrane passes span 22-42 (FFLR…ATFF), 83-103 (LFAG…PVGI), 106-126 (ATIL…LGDW), 132-152 (AVSI…LQIF), 168-188 (LEMT…LGVA), 216-236 (LAVV…LFTI), 252-272 (VVTL…ISAA), 280-300 (FWTF…LAVF), 309-329 (YFLQ…VASL), 342-362 (FNVL…LSLI), 369-389 (FIYP…ASFF), and 411-431 (YLFV…FFHQ).

The protein belongs to the glycosyltransferase 22 family. PIGB subfamily.

The protein localises to the endoplasmic reticulum membrane. The protein operates within glycolipid biosynthesis; glycosylphosphatidylinositol-anchor biosynthesis. Mannosyltransferase involved in glycosylphosphatidylinositol-anchor biosynthesis. Transfers the third mannose to Man2-GlcN-acyl-PI during GPI precursor assembly. This is GPI mannosyltransferase 3 (GPI10) from Gibberella zeae (strain ATCC MYA-4620 / CBS 123657 / FGSC 9075 / NRRL 31084 / PH-1) (Wheat head blight fungus).